The chain runs to 119 residues: MSTPATTTQAFSLKTRQPIADEDALLTEEDRILKQATKGEDCTTRRRACKNCVCGRAELERKLEAEGKLPPEGITMPPGGCGNCAKGDAFRCANCPFLGQPAFDSTEDGKVKLNLTDDI.

The segment at 33–119 is disordered; that stretch reads LKQATKGEDC…KVKLNLTDDI (87 aa). The [2Fe-2S] cluster site is built by C42, C49, C52, and C54. Residues 42–54 form a fe-S binding site A region; the sequence is CTTRRRACKNCVC. Residues C81, C84, C92, and C95 each contribute to the [4Fe-4S] cluster site. 2 consecutive short sequence motifs (cx2C motif) follow at residues 81–84 and 92–95; these read CGNC and CANC. Residues 81–95 are fe-S binding site B; it reads CGNCAKGDAFRCANC.

It belongs to the anamorsin family. As to quaternary structure, monomer. The cofactor is [2Fe-2S] cluster. Requires [4Fe-4S] cluster as cofactor.

It is found in the cytoplasm. The protein localises to the mitochondrion intermembrane space. Functionally, component of the cytosolic iron-sulfur (Fe-S) protein assembly (CIA) machinery. Required for the maturation of extramitochondrial Fe-S proteins. Part of an electron transfer chain functioning in an early step of cytosolic Fe-S biogenesis, facilitating the de novo assembly of a [4Fe-4S] cluster on the cytosolic Fe-S scaffold complex. Electrons are transferred from NADPH via a FAD- and FMN-containing diflavin oxidoreductase. Together with the diflavin oxidoreductase, also required for the assembly of the diferric tyrosyl radical cofactor of ribonucleotide reductase (RNR), probably by providing electrons for reduction during radical cofactor maturation in the catalytic small subunit. This chain is Anamorsin homolog, found in Leishmania braziliensis.